Reading from the N-terminus, the 295-residue chain is MELLSALSLDDLAASFSKLPVFPLFDVAYYIISILYLKYEPGAVDLSKRSPVASWLCAMLYCFGSYILADVLLGESPIHYFSNNANILLASAVWYLTFFCPLNIFYKIVSFLPVKLVLVGMKEVVRVRKIAMGIHHAHHHYHHGWVIMVLIGWVKGSGVALMSNLEQLLRGVWKPETNEILHMSFPTKASLYGAILFTLQQAHWLPISKAYLIFFFTLFMAVCKIYMTATHSHGSPFAIFESGICYVLFAAANGDHDDHGNHHHHHDDHDVSHSAGKSKEEHNEGTRKRKTKKAE.

The Lumenal segment spans residues M1–K18. A helical transmembrane segment spans residues L19–Y39. Over E40–P51 the chain is Cytoplasmic. A helical transmembrane segment spans residues V52–L72. Topologically, residues L73–N84 are lumenal. Residue G74 participates in Ca(2+) binding. Residues A85–F105 form a helical membrane-spanning segment. Residues Y106–G144 lie on the Cytoplasmic side of the membrane. Residues K122 and R126 each coordinate a 1,2-diacyl-sn-glycero-3-phospho-(1D-myo-inositol-4,5-bisphosphate). The chain crosses the membrane as a helical span at residues W145–L165. Residues E166–N178 are Lumenal-facing. A helical transmembrane segment spans residues E179–L199. At Q200–Q201 the chain is on the cytoplasmic side. A helical transmembrane segment spans residues A202–V222. At C223–H233 the chain is on the lumenal side. Residues G234–G254 traverse the membrane as a helical segment. Over D255–E295 the chain is Cytoplasmic. Residues D258–E295 are disordered. Basic and acidic residues predominate over residues D267–T286.

This sequence belongs to the TMEM38 family. As to quaternary structure, homotrimer; conformation seems to be controled by binding to diacylglycerol (DAG).

The protein resides in the sarcoplasmic reticulum membrane. It is found in the nucleus membrane. It carries out the reaction K(+)(in) = K(+)(out). With respect to regulation, channel activity is activated by a change of voltage within the sarcoplasmic reticulum lumen and blocked by luminal high Ca(2+) levels. Functionally, intracellular monovalent cation channel required for maintenance of rapid intracellular calcium release. Acts as a potassium counter-ion channel that functions in synchronization with calcium release from intracellular stores. Opened by a change of voltage within the sarcoplasmic reticulum lumen. This Xenopus laevis (African clawed frog) protein is Trimeric intracellular cation channel type A (tmem38a).